Here is a 176-residue protein sequence, read N- to C-terminus: Ribosome maturation factor RimM (176 aa).

Residues 99-174 (KDEFYVRDLI…IVLIQPELWN (76 aa)) enclose the PRC barrel domain.

The protein belongs to the RimM family. As to quaternary structure, binds ribosomal protein uS19.

The protein localises to the cytoplasm. Its function is as follows. An accessory protein needed during the final step in the assembly of 30S ribosomal subunit, possibly for assembly of the head region. Essential for efficient processing of 16S rRNA. May be needed both before and after RbfA during the maturation of 16S rRNA. It has affinity for free ribosomal 30S subunits but not for 70S ribosomes. The protein is Ribosome maturation factor RimM of Leptospira borgpetersenii serovar Hardjo-bovis (strain JB197).